The primary structure comprises 298 residues: Craniofacial development protein 1 (298 aa).

Acidic residues-rich tracts occupy residues 1–18 (MEEF…DEDY), 25–43 (YSED…DGEE), and 70–80 (LEEEGEEDANE). 2 disordered regions span residues 1–158 (MEEF…KPQE) and 191–223 (FFKQ…SSGM). Phosphoserine occurs at positions 82, 85, and 86. Residues 98–112 (KGIESEDARKKKEDE) show a composition bias toward basic and acidic residues. Phosphoserine is present on serine 116. 2 stretches are compositionally biased toward basic and acidic residues: residues 148-158 (VKAEKLEKPQE) and 191-200 (FFKQNEKEKP). Lysine 149 participates in a covalent cross-link: Glycyl lysine isopeptide (Lys-Gly) (interchain with G-Cter in SUMO2). The interval 177-216 (VIKEVDATSKEAKSFFKQNEKEKPQSNISSSVPSLSAGSG) is hydrophilic. Positions 205–217 (SSSVPSLSAGSGL) are enriched in low complexity. Serine 215 bears the Phosphoserine mark. The 82-residue stretch at 217 to 298 (LKRSSGMSSL…RDLRLSQMKP (82 aa)) folds into the BCNT-C domain. N6-methyllysine is present on lysine 218. Position 249 is a phosphoserine (serine 249).

The protein localises to the chromosome. It is found in the centromere. Its subcellular location is the kinetochore. In terms of biological role, may play a role during embryogenesis. This Muntiacus reevesi (Reeves' muntjac) protein is Craniofacial development protein 1 (CFDP1).